The primary structure comprises 1604 residues: E3 ubiquitin-protein ligase HECW1 (1604 aa).

One can recognise a C2 domain in the interval 182 to 318 (SAAPIFKGIG…LERHAIGDRV (137 aa)). Disordered regions lie at residues 350–539 (DEEI…CSLP), 572–604 (PSAQ…LSEV), 642–667 (GIGA…QQGA), and 727–826 (STVF…TIDE). A compositionally biased stretch (polar residues) spans 362–380 (SAETQDSIMNSMVGNSNGE). The span at 387 to 396 (EFCKDAKPES) shows a compositional bias: basic and acidic residues. The span at 398 to 412 (SEGNGVNSSENQNQE) shows a compositional bias: polar residues. Acidic residues-rich tracts occupy residues 435 to 444 (APEEPGELQD) and 458 to 469 (EVAEGLPLDEDS). The segment covering 494-505 (GAREEEMQKGKD) has biased composition (basic and acidic residues). Positions 580–589 (TEEEDGLEEE) are enriched in acidic residues. Residues 590 to 601 (STLKESSEKDGL) show a composition bias toward basic and acidic residues. Polar residues-rich tracts occupy residues 654 to 667 (STGS…QQGA), 748 to 762 (DSVQ…STNG), and 803 to 812 (HNSQPISQLP). The WW 1 domain occupies 826-859 (EPLPPNWEARIDSHGRVFYVDHINRTTTWQRPSM). Position 871 is a phosphoserine (S871). Residues 871–898 (SVHQMEQLNRRYQNIQRTMATERAEEDS) adopt a coiled-coil conformation. Residues 890–936 (ATERAEEDSGNQNSEQIPDGGGGGGGGSDSEAESSQSSLDLRREGSL) are disordered. Gly residues predominate over residues 908-917 (DGGGGGGGGS). Residues S935 and S937 each carry the phosphoserine modification. The WW 2 domain occupies 1016-1049 (LELPRGWEIKTDHQGKSFFVDHNSRATTFIDPRI). The HECT domain maps to 1269 to 1604 (SRKELQRNKL…VEETSTFGLE (336 aa)). The Glycyl thioester intermediate role is filled by C1572.

Interacts with DVL1 and SSR3. As to expression, predominantly expressed in neurons of the spinal cord.

The protein localises to the cytoplasm. It carries out the reaction S-ubiquitinyl-[E2 ubiquitin-conjugating enzyme]-L-cysteine + [acceptor protein]-L-lysine = [E2 ubiquitin-conjugating enzyme]-L-cysteine + N(6)-ubiquitinyl-[acceptor protein]-L-lysine.. Its pathway is protein modification; protein ubiquitination. In terms of biological role, E3 ubiquitin-protein ligase that mediates ubiquitination and subsequent degradation of DVL1. This chain is E3 ubiquitin-protein ligase HECW1 (Hecw1), found in Mus musculus (Mouse).